Consider the following 210-residue polypeptide: Small ribosomal subunit protein uS3 (210 aa).

Residues leucine 38 to arginine 106 form the KH type-2 domain.

Belongs to the universal ribosomal protein uS3 family. As to quaternary structure, part of the 30S ribosomal subunit. Forms a tight complex with proteins S10 and S14.

Its function is as follows. Binds the lower part of the 30S subunit head. Binds mRNA in the 70S ribosome, positioning it for translation. This Geotalea daltonii (strain DSM 22248 / JCM 15807 / FRC-32) (Geobacter daltonii) protein is Small ribosomal subunit protein uS3.